Reading from the N-terminus, the 249-residue chain is uncharacterized protein (249 aa).

It is found in the cytoplasm. The protein resides in the nucleus. This is an uncharacterized protein from Schizosaccharomyces pombe (strain 972 / ATCC 24843) (Fission yeast).